The chain runs to 638 residues: Plasma kallikrein (638 aa).

The first 19 residues, methionine 1 to cysteine 19, serve as a signal peptide directing secretion. Apple domains are found at residues cysteine 21–cysteine 104, cysteine 111–cysteine 194, cysteine 201–cysteine 284, and cysteine 292–cysteine 375. Cystine bridges form between cysteine 21–cysteine 104, cysteine 47–cysteine 77, cysteine 51–cysteine 57, cysteine 111–cysteine 194, cysteine 137–cysteine 166, cysteine 141–cysteine 147, cysteine 201–cysteine 284, cysteine 227–cysteine 256, cysteine 231–cysteine 237, cysteine 292–cysteine 375, cysteine 318–cysteine 347, cysteine 322–cysteine 328, cysteine 340–cysteine 345, cysteine 383–cysteine 503, cysteine 419–cysteine 435, cysteine 517–cysteine 584, cysteine 548–cysteine 563, and cysteine 574–cysteine 602. A glycan (N-linked (GlcNAc...) asparagine) is linked at asparagine 127. Residue asparagine 308 is glycosylated (N-linked (GlcNAc...) asparagine). Residues isoleucine 391–glutamine 626 enclose the Peptidase S1 domain. Residue asparagine 396 is glycosylated (N-linked (GlcNAc...) asparagine). The active-site Charge relay system is the histidine 434. N-linked (GlcNAc...) asparagine glycosylation is present at asparagine 453. Aspartate 483 (charge relay system) is an active-site residue. N-linked (GlcNAc...) asparagine glycosylation is present at asparagine 494. Serine 578 functions as the Charge relay system in the catalytic mechanism.

It belongs to the peptidase S1 family. Plasma kallikrein subfamily. Forms a heterodimer with SERPINA5. The zymogen is activated by factor XIIa, which cleaves the molecule into a light chain, which contains the active site, and a heavy chain, which associates with HMW kininogen. These chains are linked by one or more disulfide bonds. Interacts with iripin-3, a serine protease inhibitor from Ixodes ricinus saliva. Interacts with iripin-1, a serine protease inhibitor from Ixodes ricinus saliva. As to expression, found in plasma (at protein level).

It is found in the secreted. It carries out the reaction Cleaves selectively Arg-|-Xaa and Lys-|-Xaa bonds, including Lys-|-Arg and Arg-|-Ser bonds in (human) kininogen to release bradykinin.. Inhibited by SERPINA5. In terms of biological role, participates in the surface-dependent activation of blood coagulation. Activates, in a reciprocal reaction, coagulation factor XII/F12 after binding to negatively charged surfaces. Releases bradykinin from HMW kininogen and may also play a role in the renin-angiotensin system by converting prorenin into renin. This chain is Plasma kallikrein (KLKB1), found in Homo sapiens (Human).